A 256-amino-acid chain; its full sequence is Glutamate racemase (256 aa).

Residues 11–12 and 43–44 contribute to the substrate site; these read DS and YG. Catalysis depends on Cys-74, which acts as the Proton donor/acceptor. 75–76 serves as a coordination point for substrate; it reads NT. Cys-182 acts as the Proton donor/acceptor in catalysis. 183 to 184 lines the substrate pocket; that stretch reads TH.

Belongs to the aspartate/glutamate racemases family.

The catalysed reaction is L-glutamate = D-glutamate. Its pathway is cell wall biogenesis; peptidoglycan biosynthesis. In terms of biological role, provides the (R)-glutamate required for cell wall biosynthesis. In Leptospira interrogans serogroup Icterohaemorrhagiae serovar copenhageni (strain Fiocruz L1-130), this protein is Glutamate racemase.